Reading from the N-terminus, the 255-residue chain is Adenosylcobinamide-GDP ribazoletransferase (255 aa).

Transmembrane regions (helical) follow at residues 33 to 53 (IFLP…IELF), 57 to 77 (FPGF…SGAL), 107 to 127 (VGSM…GSYA), 136 to 156 (FTVL…IYSF), 174 to 194 (AGLI…AAFF), 196 to 216 (FSLI…FVVA), and 234 to 254 (IMEL…NIGV).

It belongs to the CobS family. It depends on Mg(2+) as a cofactor.

It is found in the cell membrane. It carries out the reaction alpha-ribazole + adenosylcob(III)inamide-GDP = adenosylcob(III)alamin + GMP + H(+). It catalyses the reaction alpha-ribazole 5'-phosphate + adenosylcob(III)inamide-GDP = adenosylcob(III)alamin 5'-phosphate + GMP + H(+). Its pathway is cofactor biosynthesis; adenosylcobalamin biosynthesis; adenosylcobalamin from cob(II)yrinate a,c-diamide: step 7/7. Its function is as follows. Joins adenosylcobinamide-GDP and alpha-ribazole to generate adenosylcobalamin (Ado-cobalamin). Also synthesizes adenosylcobalamin 5'-phosphate from adenosylcobinamide-GDP and alpha-ribazole 5'-phosphate. The sequence is that of Adenosylcobinamide-GDP ribazoletransferase from Carboxydothermus hydrogenoformans (strain ATCC BAA-161 / DSM 6008 / Z-2901).